A 117-amino-acid chain; its full sequence is uncharacterized protein (117 aa).

A helical membrane pass occupies residues 4–26; that stretch reads VLNFHFSYIYTYFITITTNYKYG.

It is found in the host membrane. This is an uncharacterized protein from Sulfolobus islandicus rod-shaped virus 1 (SIRV-1).